We begin with the raw amino-acid sequence, 197 residues long: Holliday junction branch migration complex subunit RuvA (197 aa).

The domain I stretch occupies residues 1–64 (MYEYIKGKYI…EDFIGVYGFL (64 aa)). The segment at 65–143 (TKDELSMFKL…IDILEEDDEQ (79 aa)) is domain II. The segment at 144-148 (TINKV) is flexible linker. The tract at residues 149 to 197 (TDDKKVLEAVAALITLGYSEKEANKVINSCDKNNSLEQIIKEALKYLMK) is domain III.

This sequence belongs to the RuvA family. As to quaternary structure, homotetramer. Forms an RuvA(8)-RuvB(12)-Holliday junction (HJ) complex. HJ DNA is sandwiched between 2 RuvA tetramers; dsDNA enters through RuvA and exits via RuvB. An RuvB hexamer assembles on each DNA strand where it exits the tetramer. Each RuvB hexamer is contacted by two RuvA subunits (via domain III) on 2 adjacent RuvB subunits; this complex drives branch migration. In the full resolvosome a probable DNA-RuvA(4)-RuvB(12)-RuvC(2) complex forms which resolves the HJ.

The protein localises to the cytoplasm. In terms of biological role, the RuvA-RuvB-RuvC complex processes Holliday junction (HJ) DNA during genetic recombination and DNA repair, while the RuvA-RuvB complex plays an important role in the rescue of blocked DNA replication forks via replication fork reversal (RFR). RuvA specifically binds to HJ cruciform DNA, conferring on it an open structure. The RuvB hexamer acts as an ATP-dependent pump, pulling dsDNA into and through the RuvAB complex. HJ branch migration allows RuvC to scan DNA until it finds its consensus sequence, where it cleaves and resolves the cruciform DNA. This Clostridium botulinum (strain 657 / Type Ba4) protein is Holliday junction branch migration complex subunit RuvA.